Consider the following 233-residue polypeptide: MGIEQNNPMALPLWIAVGLAATYLGAVVLTAELLNRLSLSPAEVTRKIVHIGAGQVVLIAWWLSIPGWVGAIAGVFAAGIAVLSYRLPILPSLESVGRHSYGTLFYALSIGLLVGGFFSLGLPIFAAIGILVMAWGDGLAALVGQRWGRHRYQVFGFRKSWEGTLTMVLASFLVTVVFLSYTFGFTVIVLVVAGTVAIASAGLESFSRWGIDNLTVPLGSALIAWAGSYLWLG.

Transmembrane regions (helical) follow at residues Met-9–Leu-29, Val-56–Phe-76, Val-96–Phe-118, Leu-122–Gly-144, Phe-172–Val-192, and Asn-213–Gly-233.

This sequence belongs to the polyprenol kinase family.

The protein resides in the cell membrane. It carries out the reaction phytol + CTP = phytyl phosphate + CDP + H(+). It functions in the pathway cofactor biosynthesis; tocopherol biosynthesis. Functionally, catalyzes the CTP-dependent phosphorylation of phytol to phytylmonophosphate (PMP). Can also use UTP as an alternative phosphate donor, but not ATP or GTP. Is involved in tocopherol biosynthesis, via the utilization of phytol generated by chlorophyll degradation. Also plays a significant but not critical role in the recycling of phytol for the biosynthesis of new chlorophyll molecules. In Synechocystis sp. (strain ATCC 27184 / PCC 6803 / Kazusa), this protein is Phytol kinase.